A 318-amino-acid polypeptide reads, in one-letter code: Methionyl-tRNA formyltransferase (318 aa).

112–115 (SILP) provides a ligand contact to (6S)-5,6,7,8-tetrahydrofolate.

The protein belongs to the Fmt family.

The enzyme catalyses L-methionyl-tRNA(fMet) + (6R)-10-formyltetrahydrofolate = N-formyl-L-methionyl-tRNA(fMet) + (6S)-5,6,7,8-tetrahydrofolate + H(+). Its function is as follows. Attaches a formyl group to the free amino group of methionyl-tRNA(fMet). The formyl group appears to play a dual role in the initiator identity of N-formylmethionyl-tRNA by promoting its recognition by IF2 and preventing the misappropriation of this tRNA by the elongation apparatus. The chain is Methionyl-tRNA formyltransferase from Haemophilus influenzae (strain PittEE).